The following is a 343-amino-acid chain: Glycerol-3-phosphate dehydrogenase [NAD(P)+] (343 aa).

NADPH is bound by residues serine 11, tryptophan 12, arginine 32, and lysine 106. Positions 106, 137, and 139 each coordinate sn-glycerol 3-phosphate. Alanine 141 contacts NADPH. Sn-glycerol 3-phosphate contacts are provided by lysine 192, aspartate 245, serine 255, arginine 256, and asparagine 257. The active-site Proton acceptor is lysine 192. Arginine 256 serves as a coordination point for NADPH. Residues valine 280 and glutamate 282 each contribute to the NADPH site.

The protein belongs to the NAD-dependent glycerol-3-phosphate dehydrogenase family.

The protein resides in the cytoplasm. It catalyses the reaction sn-glycerol 3-phosphate + NAD(+) = dihydroxyacetone phosphate + NADH + H(+). It carries out the reaction sn-glycerol 3-phosphate + NADP(+) = dihydroxyacetone phosphate + NADPH + H(+). The protein operates within membrane lipid metabolism; glycerophospholipid metabolism. Catalyzes the reduction of the glycolytic intermediate dihydroxyacetone phosphate (DHAP) to sn-glycerol 3-phosphate (G3P), the key precursor for phospholipid synthesis. The sequence is that of Glycerol-3-phosphate dehydrogenase [NAD(P)+] from Syntrophomonas wolfei subsp. wolfei (strain DSM 2245B / Goettingen).